The primary structure comprises 344 residues: tRNA N6-adenosine threonylcarbamoyltransferase (344 aa).

Residues His-112 and His-116 each contribute to the Fe cation site. Substrate contacts are provided by residues 134-138 (LASGG), Asp-167, Gly-180, and Asn-280. Position 308 (Asp-308) interacts with Fe cation.

Belongs to the KAE1 / TsaD family. Fe(2+) serves as cofactor.

The protein localises to the cytoplasm. The catalysed reaction is L-threonylcarbamoyladenylate + adenosine(37) in tRNA = N(6)-L-threonylcarbamoyladenosine(37) in tRNA + AMP + H(+). Functionally, required for the formation of a threonylcarbamoyl group on adenosine at position 37 (t(6)A37) in tRNAs that read codons beginning with adenine. Is involved in the transfer of the threonylcarbamoyl moiety of threonylcarbamoyl-AMP (TC-AMP) to the N6 group of A37, together with TsaE and TsaB. TsaD likely plays a direct catalytic role in this reaction. In Rickettsia conorii (strain ATCC VR-613 / Malish 7), this protein is tRNA N6-adenosine threonylcarbamoyltransferase.